The following is a 342-amino-acid chain: Heat-inducible transcription repressor HrcA (342 aa).

It belongs to the HrcA family.

Its function is as follows. Negative regulator of class I heat shock genes (grpE-dnaK-dnaJ and groELS operons). Prevents heat-shock induction of these operons. The chain is Heat-inducible transcription repressor HrcA from Oceanobacillus iheyensis (strain DSM 14371 / CIP 107618 / JCM 11309 / KCTC 3954 / HTE831).